Consider the following 294-residue polypeptide: 4-hydroxy-tetrahydrodipicolinate synthase (294 aa).

A pyruvate-binding site is contributed by Thr-45. Tyr-133 serves as the catalytic Proton donor/acceptor. The Schiff-base intermediate with substrate role is filled by Lys-161. Ile-203 is a binding site for pyruvate.

Belongs to the DapA family. In terms of assembly, homotetramer; dimer of dimers.

Its subcellular location is the cytoplasm. The enzyme catalyses L-aspartate 4-semialdehyde + pyruvate = (2S,4S)-4-hydroxy-2,3,4,5-tetrahydrodipicolinate + H2O + H(+). Its pathway is amino-acid biosynthesis; L-lysine biosynthesis via DAP pathway; (S)-tetrahydrodipicolinate from L-aspartate: step 3/4. Catalyzes the condensation of (S)-aspartate-beta-semialdehyde [(S)-ASA] and pyruvate to 4-hydroxy-tetrahydrodipicolinate (HTPA). This is 4-hydroxy-tetrahydrodipicolinate synthase from Thioalkalivibrio sulfidiphilus (strain HL-EbGR7).